The sequence spans 199 residues: Imidazoleglycerol-phosphate dehydratase (199 aa).

Belongs to the imidazoleglycerol-phosphate dehydratase family.

It localises to the cytoplasm. It carries out the reaction D-erythro-1-(imidazol-4-yl)glycerol 3-phosphate = 3-(imidazol-4-yl)-2-oxopropyl phosphate + H2O. Its pathway is amino-acid biosynthesis; L-histidine biosynthesis; L-histidine from 5-phospho-alpha-D-ribose 1-diphosphate: step 6/9. The polypeptide is Imidazoleglycerol-phosphate dehydratase (Paramagnetospirillum magneticum (strain ATCC 700264 / AMB-1) (Magnetospirillum magneticum)).